The following is a 228-amino-acid chain: MESLQQLQQQLGLMAWPLFICSALTVMLLAERLFQVLLSLTVGKGAIRHALQATSPKNPKQLAELTEHFASKRPVLYRGVAMLLAHHQFDKSLREDAAGIWLQEQRHQFNSGLRLLTLIGVISPLLGLLGTVLGLIEMFKGVAATTGSITPNVLADGLGVAMYTTAAGLLIAVPAVAGAQLLSLWADRTMAKLEHTLNYVNLWLEGMTLHADASLTVVTPQEATTENL.

3 consecutive transmembrane segments (helical) span residues Leu11–Glu31, Leu116–Ile136, and Leu158–Gly178.

It belongs to the ExbB/TolQ family. In terms of assembly, the accessory proteins ExbB and ExbD seem to form a complex with TonB.

Its subcellular location is the cell inner membrane. Involved in the TonB-dependent energy-dependent transport of various receptor-bound substrates. Protects ExbD from proteolytic degradation and functionally stabilizes TonB. The sequence is that of Biopolymer transport protein exbB1 (exbB1) from Vibrio cholerae serotype O1 (strain ATCC 39315 / El Tor Inaba N16961).